The following is a 466-amino-acid chain: Ribulose bisphosphate carboxylase large chain (466 aa).

The residue at position 5 (lysine 5) is an N6,N6,N6-trimethyllysine. Substrate contacts are provided by asparagine 114 and threonine 164. The active-site Proton acceptor is the lysine 166. Lysine 168 serves as a coordination point for substrate. Positions 192, 194, and 195 each coordinate Mg(2+). Residue lysine 192 is modified to N6-carboxylysine. Histidine 285 (proton acceptor) is an active-site residue. Arginine 286, histidine 318, and serine 370 together coordinate substrate.

It belongs to the RuBisCO large chain family. Type I subfamily. As to quaternary structure, heterohexadecamer of 8 large chains and 8 small chains; disulfide-linked. The disulfide link is formed within the large subunit homodimers. It depends on Mg(2+) as a cofactor. In terms of processing, the disulfide bond which can form in the large chain dimeric partners within the hexadecamer appears to be associated with oxidative stress and protein turnover.

Its subcellular location is the plastid. The protein localises to the chloroplast. It catalyses the reaction 2 (2R)-3-phosphoglycerate + 2 H(+) = D-ribulose 1,5-bisphosphate + CO2 + H2O. The enzyme catalyses D-ribulose 1,5-bisphosphate + O2 = 2-phosphoglycolate + (2R)-3-phosphoglycerate + 2 H(+). RuBisCO catalyzes two reactions: the carboxylation of D-ribulose 1,5-bisphosphate, the primary event in carbon dioxide fixation, as well as the oxidative fragmentation of the pentose substrate in the photorespiration process. Both reactions occur simultaneously and in competition at the same active site. In Thespesia populnea (Portia tree), this protein is Ribulose bisphosphate carboxylase large chain.